Reading from the N-terminus, the 217-residue chain is UPF0502 protein ESA_02280 (217 aa).

It belongs to the UPF0502 family.

The protein is UPF0502 protein ESA_02280 of Cronobacter sakazakii (strain ATCC BAA-894) (Enterobacter sakazakii).